The primary structure comprises 324 residues: Probable WRKY transcription factor 53 (324 aa).

The interval 93–126 (NPGSVPESPASINGSPRSEEFADGGGSSESHHRQ) is disordered. Positions 152–220 (GLEGPQDDVF…YRGTHTCSQA (69 aa)) form a DNA-binding region, WRKY.

It belongs to the WRKY group III family. As to quaternary structure, interacts with ESR/ESP and UPL5. Binds to WRKY30. Ubiquitinated by UPL5. Ubiquitination leads to its subsequent degradation, thus controlling the timing of leaf senescence.

Its subcellular location is the nucleus. In terms of biological role, transcription factor. Interacts specifically with the W box (5'-(T)TGAC[CT]-3'), a frequently occurring elicitor-responsive cis-acting element. May regulate the early events of leaf senescence. Negatively regulates the expression of ESR/ESP. Together with WRKY46 and WRKY70, promotes resistance to P.syringae, probably by enhancing salicylic acid (SA)- dependent genes. Contributes to the suppression of jasmonic acid (MeJA)-induced expression of PDF1.2. The protein is Probable WRKY transcription factor 53 of Arabidopsis thaliana (Mouse-ear cress).